We begin with the raw amino-acid sequence, 203 residues long: Glycerol-3-phosphate acyltransferase (203 aa).

6 consecutive transmembrane segments (helical) span residues 5-25, 50-70, 72-92, 115-135, 140-160, and 162-182; these read IASIALVLLAYLSGSIPFSLL, TCGFSAFALAMGGDMLKGALP, IAAQALGLSPLAVVIVGTAAM, VVLTLAPLVALPGLAAWAVTF, ISAVASLTAAAVCGIAAAVLL, and LGMLPPAYAIFVWGAVAAIVF.

This sequence belongs to the PlsY family. Probably interacts with PlsX.

It is found in the cell membrane. It carries out the reaction an acyl phosphate + sn-glycerol 3-phosphate = a 1-acyl-sn-glycero-3-phosphate + phosphate. The protein operates within lipid metabolism; phospholipid metabolism. Catalyzes the transfer of an acyl group from acyl-phosphate (acyl-PO(4)) to glycerol-3-phosphate (G3P) to form lysophosphatidic acid (LPA). This enzyme utilizes acyl-phosphate as fatty acyl donor, but not acyl-CoA or acyl-ACP. The sequence is that of Glycerol-3-phosphate acyltransferase from Roseiflexus sp. (strain RS-1).